The sequence spans 564 residues: MFS-type transporter astH (564 aa).

Asn23 carries an N-linked (GlcNAc...) asparagine glycan. Positions 26–59 (KDTLVNCSPDPENPEKGQASSPRTQISVDDNEES) are disordered. Positions 43-53 (QASSPRTQISV) are enriched in polar residues. Transmembrane regions (helical) follow at residues 69 to 89 (LAMI…DTTI), 106 to 126 (DVGW…LSFG), 143 to 163 (GMFE…GLII), and 197 to 217 (GILG…GGAF). N-linked (GlcNAc...) asparagine glycosylation occurs at Asn220. The next 6 helical transmembrane spans lie at 225–245 (WCFY…ILFF), 266–286 (LLGS…LQWG), 297–317 (IIAL…VQWW), 339–359 (LFSF…PMWF), 375–395 (LPMV…VGAL), and 396–416 (GYYT…AGLL). The N-linked (GlcNAc...) asparagine glycan is linked to Asn425. 2 helical membrane-spanning segments follow: residues 461 to 481 (TGTV…MSVG) and 537 to 557 (FYVA…MQWI).

It belongs to the major facilitator superfamily. TCR/Tet family.

The protein localises to the membrane. In terms of biological role, MFS-type transporter; part of the gene cluster that mediates the biosynthesis of astellolides, drimane-type sesquiterpene esters that show antimicrobial, anti-inflammatory, and anti-tumor activities. Seems not to be involved in astellolides translocation. The polypeptide is MFS-type transporter astH (Aspergillus oryzae (strain ATCC 42149 / RIB 40) (Yellow koji mold)).